Consider the following 156-residue polypeptide: Zinc metalloproteinase-disintegrin jararin (156 aa).

Residues 1-67 (FVANRMAHEL…NYYGCLLNEP (67 aa)) form the Peptidase M12B domain. His-8 lines the Zn(2+) pocket. Residue Glu-9 is part of the active site. His-12 contacts Zn(2+). 9 disulfides stabilise this stretch: Cys-23–Cys-47, Cys-25–Cys-30, Cys-78–Cys-97, Cys-89–Cys-107, Cys-91–Cys-102, Cys-101–Cys-124, Cys-115–Cys-121, Cys-120–Cys-145, and Cys-133–Cys-152. Residues 75 to 156 (PPFCGNYYPE…GQSGDCPRNS (82 aa)) enclose the Disintegrin domain. Over residues 136–145 (GRGDNPDDRC) the composition is skewed to basic and acidic residues. The segment at 136–156 (GRGDNPDDRCTGQSGDCPRNS) is disordered. The short motif at 137–139 (RGD) is the Cell attachment site element. Over residues 146 to 156 (TGQSGDCPRNS) the composition is skewed to polar residues.

It belongs to the venom metalloproteinase (M12B) family. P-II subfamily. P-IIb sub-subfamily. In terms of assembly, monomer. Zn(2+) serves as cofactor. In terms of tissue distribution, expressed by the venom gland.

It is found in the secreted. Snake venom zinc metalloproteinase that inhibits ADP-induced platelet aggregation (probably by binding integrin alpha-IIb/beta-3 (ITGA2B/ITGB3)) and degrades fibrinogen. The sequence is that of Zinc metalloproteinase-disintegrin jararin from Bothrops jararaca (Jararaca).